Here is a 499-residue protein sequence, read N- to C-terminus: Cobyric acid synthase (499 aa).

Residues 266 to 449 form the GATase cobBQ-type domain; that stretch reads RLEIAVVRLP…LHGLFDNHLW (184 aa). Cys344 functions as the Nucleophile in the catalytic mechanism. His441 is a catalytic residue.

It belongs to the CobB/CobQ family. CobQ subfamily.

It functions in the pathway cofactor biosynthesis; adenosylcobalamin biosynthesis. Functionally, catalyzes amidations at positions B, D, E, and G on adenosylcobyrinic A,C-diamide. NH(2) groups are provided by glutamine, and one molecule of ATP is hydrogenolyzed for each amidation. The chain is Cobyric acid synthase from Synechococcus sp. (strain JA-2-3B'a(2-13)) (Cyanobacteria bacterium Yellowstone B-Prime).